The primary structure comprises 100 residues: NADH-quinone oxidoreductase subunit K (100 aa).

3 consecutive transmembrane segments (helical) span residues 4–24 (LQHG…GLVI), 28–48 (LLFM…AFVV), and 60–80 (IMYI…LALL).

This sequence belongs to the complex I subunit 4L family. As to quaternary structure, NDH-1 is composed of 13 different subunits. Subunits NuoA, H, J, K, L, M, N constitute the membrane sector of the complex.

It localises to the cell inner membrane. It catalyses the reaction a quinone + NADH + 5 H(+)(in) = a quinol + NAD(+) + 4 H(+)(out). NDH-1 shuttles electrons from NADH, via FMN and iron-sulfur (Fe-S) centers, to quinones in the respiratory chain. The immediate electron acceptor for the enzyme in this species is believed to be ubiquinone. Couples the redox reaction to proton translocation (for every two electrons transferred, four hydrogen ions are translocated across the cytoplasmic membrane), and thus conserves the redox energy in a proton gradient. This Cronobacter sakazakii (strain ATCC BAA-894) (Enterobacter sakazakii) protein is NADH-quinone oxidoreductase subunit K.